We begin with the raw amino-acid sequence, 469 residues long: MVSQPTTSSGPQFECETGNYHTFCPISCVAWLYQKIEDSFFLVIGTKTCGYFLQNAMGVMIFAEPRYAMAELEEGDVNAKLNAYDELQRLCLQVKKDRNPSVIVWIGTCTTEIIKMDLEGIAPKLEDEIGIPIVVARANGLDYAFTQGEDTVLAAMASRCPAPQEVRSEEEKKERTGGLRTLFSHGKKDEKKAGPAPSEYVDHQPLVLFGSLTDPVVNQLTLELKKQGIRVSGWLPAPRYTELPIVEQGVTYVAGVNPFLSRTASALQRRMRCNLITTPFPIGPDGTRGWIEAICQALGVIPKGLDEREQQIWDALRDDVEFLKGRSVFFMGDNLLEVSMARFLIRCGMIVHEVGIPYMDKRYQQAELELLDRTCRELGHPPVRIVEKPDNYNQIQRIYACKPDLVITGMAHANPLEARGITTKWSVEFTFAMIHGFTNAHDMLKMVRKPLDRNNALKSLGWEKLIQEV.

Residues Cys24, Cys49, and Cys109 each contribute to the [4Fe-4S] cluster site.

The protein belongs to the BchN/ChlN family. In terms of assembly, protochlorophyllide reductase is composed of three subunits; ChlL, ChlN and ChlB. Forms a heterotetramer of two ChlB and two ChlN subunits. The cofactor is [4Fe-4S] cluster.

It carries out the reaction chlorophyllide a + oxidized 2[4Fe-4S]-[ferredoxin] + 2 ADP + 2 phosphate = protochlorophyllide a + reduced 2[4Fe-4S]-[ferredoxin] + 2 ATP + 2 H2O. It functions in the pathway porphyrin-containing compound metabolism; chlorophyll biosynthesis (light-independent). In terms of biological role, component of the dark-operative protochlorophyllide reductase (DPOR) that uses Mg-ATP and reduced ferredoxin to reduce ring D of protochlorophyllide (Pchlide) to form chlorophyllide a (Chlide). This reaction is light-independent. The NB-protein (ChlN-ChlB) is the catalytic component of the complex. The sequence is that of Light-independent protochlorophyllide reductase subunit N from Gloeobacter violaceus (strain ATCC 29082 / PCC 7421).